A 383-amino-acid chain; its full sequence is Succinyl-diaminopimelate desuccinylase (383 aa).

H74 provides a ligand contact to Zn(2+). The active site involves D76. D107 is a Zn(2+) binding site. The active-site Proton acceptor is E141. Residues E142, E170, and H356 each contribute to the Zn(2+) site.

This sequence belongs to the peptidase M20A family. DapE subfamily. Homodimer. Requires Zn(2+) as cofactor. Co(2+) serves as cofactor.

It carries out the reaction N-succinyl-(2S,6S)-2,6-diaminopimelate + H2O = (2S,6S)-2,6-diaminopimelate + succinate. It functions in the pathway amino-acid biosynthesis; L-lysine biosynthesis via DAP pathway; LL-2,6-diaminopimelate from (S)-tetrahydrodipicolinate (succinylase route): step 3/3. In terms of biological role, catalyzes the hydrolysis of N-succinyl-L,L-diaminopimelic acid (SDAP), forming succinate and LL-2,6-diaminopimelate (DAP), an intermediate involved in the bacterial biosynthesis of lysine and meso-diaminopimelic acid, an essential component of bacterial cell walls. This Ralstonia nicotianae (strain ATCC BAA-1114 / GMI1000) (Ralstonia solanacearum) protein is Succinyl-diaminopimelate desuccinylase.